The chain runs to 751 residues: Diamine oxidase [copper-containing] (751 aa).

An N-terminal signal peptide occupies residues 1-19; that stretch reads MPALGWAVAAILMLQTAMA. N110 and N168 each carry an N-linked (GlcNAc...) asparagine glycan. A disulfide bridge links C177 with C181. D373 (proton acceptor) is an active-site residue. C391 and C417 are oxidised to a cystine. Residue Y461 is the Schiff-base intermediate with substrate; via topaquinone of the active site. At Y461 the chain carries 2',4',5'-topaquinone. The Cu(2+) site is built by H510 and H512. Residues D519, L520, and D521 each coordinate Ca(2+). N538 is a glycosylation site (N-linked (GlcNAc...) asparagine). Ca(2+)-binding residues include E562, F653, N656, E658, D664, and L665. H675 lines the Cu(2+) pocket. N-linked (GlcNAc...) asparagine glycosylation is present at N745.

This sequence belongs to the copper/topaquinone oxidase family. In terms of assembly, homodimer; disulfide-linked. Cu(2+) serves as cofactor. Ca(2+) is required as a cofactor. The cofactor is L-topaquinone. Post-translationally, N-glycosylated. Topaquinone (TPQ) is generated by copper-dependent autoxidation of a specific tyrosyl residue. Widely expressed with higher expression in placenta and kidney.

Its subcellular location is the secreted. The protein localises to the extracellular space. The protein resides in the cell membrane. The enzyme catalyses histamine + O2 + H2O = imidazole-4-acetaldehyde + H2O2 + NH4(+). The catalysed reaction is N(tau)-methylhistamine + O2 + H2O = 1-methylimidazole-4-acetaldehyde + H2O2 + NH4(+). It catalyses the reaction putrescine + O2 + H2O = 4-aminobutanal + H2O2 + NH4(+). It carries out the reaction cadaverine + O2 + H2O = 5-aminopentanal + H2O2 + NH4(+). With respect to regulation, inhibited by amiloride and amiloride analogs. Inhibited by isoniazid, cimetidine, clonidine, berenil and pentamidine. Functionally, catalyzes the oxidative deamination of primary amines to the corresponding aldehydes with the concomitant production of hydrogen peroxide and ammonia. Its preferred substrates are the diamines histamine and 1-methylhistamine and it could therefore play a role in allergic and immune responses. Has a broad specificity for diamines and can also act on cadaverine and putrescine, two products of amino acid catabolism. It could also act on polyamines, like spermidine and spermine though less efficiently, and regulate various biological processes. This is Diamine oxidase [copper-containing] from Homo sapiens (Human).